A 487-amino-acid chain; its full sequence is MKPSTEWWRYLAPLAVIAIIALIPVPAGLESHTWLYFAVFTGVIVGLILEPVPGAVVAMVGISIIAILSPWLLFSPEQLAQPGFKFTAKSLSWAVSGFSNSVIWLIFAAFMFGTGYEKTGLGRRIALILVKKMGHRTLFLGYAVMFSELILAPVTPSNSARGAGIIYPIIRNLPPLYQSQPNDSSSRSIGSYIMWMGIVADCVTSAIFLTAMAPNLLLIGLMKSASHATLSWGDWFLGMLPLSILLVLLVPWLAYVLYPPVLKSGDQVPRWAETELQAMGPLCSREKRMLGLIVGALVLWIFGGDYIDAAMVGYSVVALMLLLRIISWDDIVSNKAAWNVFFWLASLITLATGLNNTGFISWFGKLLAGSLSGYSPTMVMVALIVVFYLLRYFFASATAYTSALAPMMIAAALAMPEIPLPVFCLMVGAAIGLGSILTPYATGPSPIYYGSGYLPTADYWRLGAIFGLIFLVLLVITGLLWMPVVLL.

14 consecutive transmembrane segments (helical) span residues 10–30 (YLAPLAVIAIIALIPVPAGLE), 33–53 (TWLYFAVFTGVIVGLILEPVP), 54–74 (GAVVAMVGISIIAILSPWLLF), 93–113 (WAVSGFSNSVIWLIFAAFMFG), 137–157 (TLFLGYAVMFSELILAPVTPS), 189–209 (IGSYIMWMGIVADCVTSAIFL), 236–256 (FLGMLPLSILLVLLVPWLAYV), 292–312 (LIVGALVLWIFGGDYIDAAMV), 313–333 (GYSVVALMLLLRIISWDDIVS), 340–360 (VFFWLASLITLATGLNNTGFI), 370–390 (SLSGYSPTMVMVALIVVFYLL), 393–413 (FFASATAYTSALAPMMIAAAL), 418–438 (IPLPVFCLMVGAAIGLGSILT), and 465–485 (IFGLIFLVLLVITGLLWMPVV).

Belongs to the SLC13A/DASS transporter (TC 2.A.47) family. DIT1 subfamily.

The protein resides in the cell inner membrane. The enzyme catalyses (2R,3R)-tartrate(out) + succinate(in) = (2R,3R)-tartrate(in) + succinate(out). In terms of biological role, catalyzes the uptake of tartrate in exchange for intracellular succinate. Essential for anaerobic L-tartrate fermentation. The polypeptide is L-tartrate/succinate antiporter (ttdT) (Shigella sonnei (strain Ss046)).